We begin with the raw amino-acid sequence, 331 residues long: Biotin synthase (331 aa).

Residues 46-275 enclose the Radical SAM core domain; sequence YYGKKVKLNM…TKEIRISGGR (230 aa). The [4Fe-4S] cluster site is built by Cys64, Cys68, and Cys71. Cys108, Cys140, Cys200, and Arg270 together coordinate [2Fe-2S] cluster.

It belongs to the radical SAM superfamily. Biotin synthase family. In terms of assembly, homodimer. Requires [4Fe-4S] cluster as cofactor. The cofactor is [2Fe-2S] cluster.

The enzyme catalyses (4R,5S)-dethiobiotin + (sulfur carrier)-SH + 2 reduced [2Fe-2S]-[ferredoxin] + 2 S-adenosyl-L-methionine = (sulfur carrier)-H + biotin + 2 5'-deoxyadenosine + 2 L-methionine + 2 oxidized [2Fe-2S]-[ferredoxin]. Its pathway is cofactor biosynthesis; biotin biosynthesis; biotin from 7,8-diaminononanoate: step 2/2. Catalyzes the conversion of dethiobiotin (DTB) to biotin by the insertion of a sulfur atom into dethiobiotin via a radical-based mechanism. This is Biotin synthase from Lysinibacillus sphaericus (strain C3-41).